Consider the following 390-residue polypeptide: Digeranylgeranylglycerophospholipid reductase (390 aa).

Residues A18, E37, C48, A49, A51, R98, V122, D278, G290, and I291 each contribute to the FAD site. V368 provides a ligand contact to a 2,3-bis-O-(geranylgeranyl)-sn-glycerol 1-phospholipid.

It belongs to the geranylgeranyl reductase family. DGGGPL reductase subfamily. Requires FAD as cofactor.

It catalyses the reaction a 2,3-bis-O-phytanyl-sn-glycerol 1-phospholipid + 8 A = a 2,3-bis-O-(geranylgeranyl)-sn-glycerol 1-phospholipid + 8 AH2. It carries out the reaction 2,3-bis-O-(phytanyl)-sn-glycerol 1-phosphate + 8 A = 2,3-bis-O-(geranylgeranyl)-sn-glycerol 1-phosphate + 8 AH2. The catalysed reaction is CDP-2,3-bis-O-(geranylgeranyl)-sn-glycerol + 8 AH2 = CDP-2,3-bis-O-(phytanyl)-sn-glycerol + 8 A. The enzyme catalyses archaetidylserine + 8 AH2 = 2,3-bis-O-phytanyl-sn-glycero-3-phospho-L-serine + 8 A. It participates in membrane lipid metabolism; glycerophospholipid metabolism. Its function is as follows. Is involved in the reduction of 2,3-digeranylgeranylglycerophospholipids (unsaturated archaeols) into 2,3-diphytanylglycerophospholipids (saturated archaeols) in the biosynthesis of archaeal membrane lipids. Catalyzes the formation of archaetidic acid (2,3-di-O-phytanyl-sn-glyceryl phosphate) from 2,3-di-O-geranylgeranylglyceryl phosphate (DGGGP) via the hydrogenation of each double bond of the isoprenoid chains. Is also probably able to reduce double bonds of geranyl groups in CDP-2,3-bis-O-(geranylgeranyl)-sn-glycerol and archaetidylserine, thus acting at various stages in the biosynthesis of archaeal membrane lipids. In Methanococcus maripaludis (strain C5 / ATCC BAA-1333), this protein is Digeranylgeranylglycerophospholipid reductase.